Reading from the N-terminus, the 247-residue chain is MPRFRLIVEYDGTDYVGWQRQDNGPSVQGAIEKAVLSLTGETVRVRGAGRTDSGVHARGQVAHLDLTRAWKPYTLQNALNAHLSLAGERVSILEVEEAAADFDARFSAIRRHYLYRIISRRSPLALEARRAWWVPKALDHDAMHEAAQRLLGHHDFTTFRSANCQATSPMRTLDRLDVTRTGDLIEIRASAQSFLHNQIRSFAGSLKLVGESKWTPDNLQAALEARDRKACGPVAPPDGLYFMRVDY.

Asp-52 acts as the Nucleophile in catalysis. Position 113 (Tyr-113) interacts with substrate.

Belongs to the tRNA pseudouridine synthase TruA family. As to quaternary structure, homodimer.

The catalysed reaction is uridine(38/39/40) in tRNA = pseudouridine(38/39/40) in tRNA. Its function is as follows. Formation of pseudouridine at positions 38, 39 and 40 in the anticodon stem and loop of transfer RNAs. The chain is tRNA pseudouridine synthase A from Sinorhizobium medicae (strain WSM419) (Ensifer medicae).